We begin with the raw amino-acid sequence, 204 residues long: Dof zinc finger protein DOF3.1 (204 aa).

Positions 1-25 (MQDPAAYYQTMMAKQQQQQQPQFAE) are disordered. Residues 29–83 (LKCPRCDSPNTKFCYYNNYNLSQPRHFCKSCRRYWTKGGALRNVPVGGGSRKNAT) form a Dof-type zinc finger. The Zn(2+) site is built by cysteine 31, cysteine 34, cysteine 56, and cysteine 59. Disordered stretches follow at residues 70–128 (RNVP…TRML) and 182–204 (RTEP…AEKN). A compositionally biased stretch (low complexity) spans 84–102 (KRSTSSSSSASSPSNSSQN). Residues 106–124 (KNPDPDPDPRNSQKPDLDP) are compositionally biased toward basic and acidic residues.

It is found in the nucleus. Functionally, transcription factor that binds specifically to a 5'-AA[AG]G-3' consensus core sequence. The protein is Dof zinc finger protein DOF3.1 (DOF3.1) of Arabidopsis thaliana (Mouse-ear cress).